We begin with the raw amino-acid sequence, 221 residues long: Ras-related protein RABA5a (221 aa).

21–28 provides a ligand contact to GTP; it reads GDSAVGKS. Residues 43–51 carry the Effector region motif; that stretch reads SKSTIGVEF. Residues 69–73, 127–130, and 157–158 contribute to the GTP site; these read DTAGQ, NKSD, and SA. Residues C218 and C219 are each lipidated (S-geranylgeranyl cysteine).

Belongs to the small GTPase superfamily. Rab family.

The protein localises to the cell membrane. Intracellular vesicle trafficking and protein transport. The sequence is that of Ras-related protein RABA5a (RABA5A) from Arabidopsis thaliana (Mouse-ear cress).